The sequence spans 144 residues: Transcriptional regulator MraZ (144 aa).

SpoVT-AbrB domains lie at 4 to 47 (EYKN…TADK) and 77 to 120 (AQEI…DLKQ).

This sequence belongs to the MraZ family. In terms of assembly, forms oligomers.

The protein localises to the cytoplasm. The protein resides in the nucleoid. The protein is Transcriptional regulator MraZ of Treponema denticola (strain ATCC 35405 / DSM 14222 / CIP 103919 / JCM 8153 / KCTC 15104).